Consider the following 20-residue polypeptide: Serum amyloid P-component (20 aa).

The Pentraxin (PTX) domain occupies 1-20; sequence ZPIDLMGKVFVFDKELSPBI.

Belongs to the pentraxin family. As to quaternary structure, homopentamer. Pentraxin (or pentaxin) have a discoid arrangement of 5 non-covalently bound subunits.

It is found in the secreted. The sequence is that of Serum amyloid P-component from Pleuronectes platessa (European plaice).